The following is a 639-amino-acid chain: Extracellular metalloproteinase 9 (639 aa).

An N-terminal signal peptide occupies residues 1-19; it reads MHGLLLAAGLLSLPLRALG. A propeptide spanning residues 20-250 is cleaved from the precursor; sequence HPNPNPQMHT…IHGVVDYVAD (231 aa). Residue asparagine 278 is glycosylated (N-linked (GlcNAc...) asparagine). The disordered stretch occupies residues 293-312; the sequence is PTTRGNNGIAQDNPSGGNQY. Histidine 434 serves as a coordination point for Zn(2+). Glutamate 435 is an active-site residue. Zn(2+) is bound at residue histidine 438.

The protein belongs to the peptidase M36 family. It depends on Zn(2+) as a cofactor.

It localises to the secreted. Secreted metalloproteinase that allows assimilation of proteinaceous substrates and probably acts as a virulence factor. This is Extracellular metalloproteinase 9 (MEP9) from Coccidioides posadasii (strain C735) (Valley fever fungus).